The following is a 303-amino-acid chain: Lipoyl synthase (303 aa).

The [4Fe-4S] cluster site is built by C35, C40, C46, C61, C65, C68, and S273. Positions 47 to 262 constitute a Radical SAM core domain; it reads FRERQATFLI…KELAEKMGFR (216 aa).

This sequence belongs to the radical SAM superfamily. Lipoyl synthase family. [4Fe-4S] cluster serves as cofactor.

The protein localises to the cytoplasm. It catalyses the reaction [[Fe-S] cluster scaffold protein carrying a second [4Fe-4S](2+) cluster] + N(6)-octanoyl-L-lysyl-[protein] + 2 oxidized [2Fe-2S]-[ferredoxin] + 2 S-adenosyl-L-methionine + 4 H(+) = [[Fe-S] cluster scaffold protein] + N(6)-[(R)-dihydrolipoyl]-L-lysyl-[protein] + 4 Fe(3+) + 2 hydrogen sulfide + 2 5'-deoxyadenosine + 2 L-methionine + 2 reduced [2Fe-2S]-[ferredoxin]. It participates in protein modification; protein lipoylation via endogenous pathway; protein N(6)-(lipoyl)lysine from octanoyl-[acyl-carrier-protein]: step 2/2. In terms of biological role, catalyzes the radical-mediated insertion of two sulfur atoms into the C-6 and C-8 positions of the octanoyl moiety bound to the lipoyl domains of lipoate-dependent enzymes, thereby converting the octanoylated domains into lipoylated derivatives. This is Lipoyl synthase from Geobacter sulfurreducens (strain ATCC 51573 / DSM 12127 / PCA).